We begin with the raw amino-acid sequence, 383 residues long: S-adenosylmethionine synthase (383 aa).

His15 lines the ATP pocket. Position 17 (Asp17) interacts with Mg(2+). Glu43 is a K(+) binding site. Residues Glu56 and Gln99 each contribute to the L-methionine site. The interval 99–109 is flexible loop; the sequence is QSPDINQGVDR. ATP-binding positions include 164 to 166, 230 to 231, Asp239, 245 to 246, Ala262, and Lys266; these read DAK, RF, and RK. Asp239 lines the L-methionine pocket. Lys270 contributes to the L-methionine binding site.

It belongs to the AdoMet synthase family. In terms of assembly, homotetramer; dimer of dimers. The cofactor is Mg(2+). It depends on K(+) as a cofactor.

The protein resides in the cytoplasm. The enzyme catalyses L-methionine + ATP + H2O = S-adenosyl-L-methionine + phosphate + diphosphate. It functions in the pathway amino-acid biosynthesis; S-adenosyl-L-methionine biosynthesis; S-adenosyl-L-methionine from L-methionine: step 1/1. Its function is as follows. Catalyzes the formation of S-adenosylmethionine (AdoMet) from methionine and ATP. The overall synthetic reaction is composed of two sequential steps, AdoMet formation and the subsequent tripolyphosphate hydrolysis which occurs prior to release of AdoMet from the enzyme. The sequence is that of S-adenosylmethionine synthase from Shewanella baltica (strain OS223).